Here is a 600-residue protein sequence, read N- to C-terminus: Elongation factor 4 (600 aa).

Residues 4 to 186 (KNVRNFCIIA…AIVNRIPPPK (183 aa)) enclose the tr-type G domain. GTP contacts are provided by residues 16–21 (DHGKST) and 133–136 (NKID).

This sequence belongs to the TRAFAC class translation factor GTPase superfamily. Classic translation factor GTPase family. LepA subfamily.

It localises to the cell inner membrane. The catalysed reaction is GTP + H2O = GDP + phosphate + H(+). Required for accurate and efficient protein synthesis under certain stress conditions. May act as a fidelity factor of the translation reaction, by catalyzing a one-codon backward translocation of tRNAs on improperly translocated ribosomes. Back-translocation proceeds from a post-translocation (POST) complex to a pre-translocation (PRE) complex, thus giving elongation factor G a second chance to translocate the tRNAs correctly. Binds to ribosomes in a GTP-dependent manner. This chain is Elongation factor 4, found in Aquifex aeolicus (strain VF5).